The following is a 245-amino-acid chain: Derlin-1 (245 aa).

Over 1–17 (MDAGVWYRSLPRFTRYW) the chain is Cytoplasmic. The chain crosses the membrane as a helical span at residues 18-38 (LTATVVLSMLCRFDVIPLHWL). Topologically, residues 39-58 (HLDRSAVFSKLQLWRCMTSL) are lumenal. A helical transmembrane segment spans residues 59–79 (FVFPISSNTAFHFLINCFFIV). Over 80–99 (QYSSKLEKDQYSRSPADYLY) the chain is Cytoplasmic. Residues 100 to 120 (LLIVSAVLANIGGMIFNVYFL) form a helical membrane-spanning segment. Over 121–156 (MDTLVLAITYIWCQLNKDVTVSFWFGTRFKAMYLPW) the chain is Lumenal. Residues 157-177 (VLAAFEFIFHFSLASLVGIFV) traverse the membrane as a helical segment. The Cytoplasmic portion of the chain corresponds to 178-245 (GHVYYFFKFQ…WGRGMTLGRN (68 aa)). Residues 218–245 (FGLPPESRAPPRQATESPWGRGMTLGRN) form a disordered region.

Belongs to the derlin family.

It is found in the endoplasmic reticulum membrane. In terms of biological role, may be involved in the degradation process of specific misfolded endoplasmic reticulum (ER) luminal proteins. May also involved in endoplasmic reticulum stress-induced pre-emptive quality control, a mechanism that selectively attenuates the translocation of newly synthesized proteins into the endoplasmic reticulum and reroutes them to the cytosol for proteasomal degradation. This Drosophila melanogaster (Fruit fly) protein is Derlin-1.